The primary structure comprises 599 residues: MRVSRLMLVTLRDIPADAEIASHQLLLRGGYIRRVTSGIYAYLPLMWRVLRKITSIVQEEMDATGALETLLPQLQPAELWRRSGRWQGYTAGEGLMFHLEDRQGRELGLGPTHEEVITSLAGDLLRSYRQLPVTLYQIQSKFRDEIRPRFGLMRGREFIMKDAYSFHSCEADLAMTYRAMDEAYQRIFSRCGLETVAVEADSGAIGGASSQEFMVTADAGEDLILISGDGHYAANQEKAVSHPPKAIPLPASKVALLDTPEQGTIETLCTAQGLVPSQVVKVLVMLARFEDGELQPVLVSIRGDQQLNEVKLINALSRELNKGVLDVAPISADQITAQKLEAWPFGAIGPDLDDALLSGATSWTKHFLRLADPTATELNCFVCGANQNNQHRTGMTWSKLGGVPKSVDLRKSQAGDRCIHDSSQILEERRGIEVGHIFQLGRKYSEALEACFTNDQGTQEPFWMGCYGIGISRLAQAAVEQHHDEAGMKWPLAIAPFEVIIVVANIQDEVQQKLAEQLYSELQAADIEALLDDRTERAGVKFKDADLIGIPWRVVVGRDAAKGQVELIQRSSRKVQILSAKQAFTALVKDIAANQNTRV.

This sequence belongs to the class-II aminoacyl-tRNA synthetase family. ProS type 1 subfamily. Homodimer.

Its subcellular location is the cytoplasm. The catalysed reaction is tRNA(Pro) + L-proline + ATP = L-prolyl-tRNA(Pro) + AMP + diphosphate. In terms of biological role, catalyzes the attachment of proline to tRNA(Pro) in a two-step reaction: proline is first activated by ATP to form Pro-AMP and then transferred to the acceptor end of tRNA(Pro). As ProRS can inadvertently accommodate and process non-cognate amino acids such as alanine and cysteine, to avoid such errors it has two additional distinct editing activities against alanine. One activity is designated as 'pretransfer' editing and involves the tRNA(Pro)-independent hydrolysis of activated Ala-AMP. The other activity is designated 'posttransfer' editing and involves deacylation of mischarged Ala-tRNA(Pro). The misacylated Cys-tRNA(Pro) is not edited by ProRS. The protein is Proline--tRNA ligase of Prochlorococcus marinus (strain MIT 9313).